The following is a 422-amino-acid chain: GTPase Obg (422 aa).

The Obg domain occupies 1-158 (MFYDRAKIYV…LWLELELKVI (158 aa)). Residues 159–330 (ADVGLIGFPN…VIHRVAELLA (172 aa)) enclose the OBG-type G domain. GTP is bound by residues 165–172 (GFPNAGKS), 190–194 (FTTLV), 212–215 (DIPG), 282–285 (NKMD), and 311–313 (SAA). Residues serine 172 and threonine 192 each coordinate Mg(2+). The region spanning 344–422 (VMFEPEERFN…IGDWEFEWSE (79 aa)) is the OCT domain.

The protein belongs to the TRAFAC class OBG-HflX-like GTPase superfamily. OBG GTPase family. In terms of assembly, monomer. Mg(2+) serves as cofactor.

The protein resides in the cytoplasm. In terms of biological role, an essential GTPase which binds GTP, GDP and possibly (p)ppGpp with moderate affinity, with high nucleotide exchange rates and a fairly low GTP hydrolysis rate. Plays a role in control of the cell cycle, stress response, ribosome biogenesis and in those bacteria that undergo differentiation, in morphogenesis control. The sequence is that of GTPase Obg from Desulforamulus reducens (strain ATCC BAA-1160 / DSM 100696 / MI-1) (Desulfotomaculum reducens).